Here is a 456-residue protein sequence, read N- to C-terminus: Tyrosinase-like protein (456 aa).

A signal peptide spans 1–22 (MNTMTLLGKVFLLQFLIGVGFC). His145, His154, His163, His295, His299, and His322 together coordinate Cu cation.

It belongs to the tyrosinase family. Cu(2+) serves as cofactor. Prismatic layer of shell (at protein level).

The protein localises to the secreted. This Pinctada maxima (Silver-lipped pearl oyster) protein is Tyrosinase-like protein.